The sequence spans 190 residues: Potassium-transporting ATPase KdpC subunit (190 aa).

A helical transmembrane segment spans residues 10–30 (TFLFLLLITGGVYPLLTTALG).

This sequence belongs to the KdpC family. As to quaternary structure, the system is composed of three essential subunits: KdpA, KdpB and KdpC.

Its subcellular location is the cell inner membrane. Part of the high-affinity ATP-driven potassium transport (or Kdp) system, which catalyzes the hydrolysis of ATP coupled with the electrogenic transport of potassium into the cytoplasm. This subunit acts as a catalytic chaperone that increases the ATP-binding affinity of the ATP-hydrolyzing subunit KdpB by the formation of a transient KdpB/KdpC/ATP ternary complex. This Escherichia fergusonii (strain ATCC 35469 / DSM 13698 / CCUG 18766 / IAM 14443 / JCM 21226 / LMG 7866 / NBRC 102419 / NCTC 12128 / CDC 0568-73) protein is Potassium-transporting ATPase KdpC subunit.